The sequence spans 824 residues: Putative beta-glucuronidase (824 aa).

Residues 26-43 (YLKLVLVLYLIMVSWSGY) traverse the membrane as a helical segment. Residue Glu-430 is the Proton donor of the active site.

This sequence belongs to the glycosyl hydrolase 2 family.

Its subcellular location is the membrane. It catalyses the reaction a beta-D-glucuronoside + H2O = D-glucuronate + an alcohol. Its function is as follows. Glycoside hydrolase that may be involved in ulvan degradation. Ulvan is the main polysaccharide component of the Ulvales (green seaweed) cell wall. It is composed of disaccharide building blocks comprising 3-sulfated rhamnose (Rha3S) linked to D-glucuronic acid (GlcA), L-iduronic acid (IduA), or D-xylose (Xyl). The sequence is that of Putative beta-glucuronidase from Formosa agariphila (strain DSM 15362 / KCTC 12365 / LMG 23005 / KMM 3901 / M-2Alg 35-1).